Consider the following 519-residue polypeptide: NADH-quinone oxidoreductase subunit C/D (519 aa).

The interval 1-138 is NADH dehydrogenase I subunit C; it reads MSERIEIPAE…TNEEPVDTTQ (138 aa). The NADH dehydrogenase I subunit D stretch occupies residues 159-519; it reads DEYIINIGPQ…VDYVVPDIDR (361 aa).

This sequence in the N-terminal section; belongs to the complex I 30 kDa subunit family. In the C-terminal section; belongs to the complex I 49 kDa subunit family. NDH-1 is composed of 13 different subunits. Subunits NuoB, CD, E, F, and G constitute the peripheral sector of the complex.

The protein resides in the cell inner membrane. It catalyses the reaction a quinone + NADH + 5 H(+)(in) = a quinol + NAD(+) + 4 H(+)(out). NDH-1 shuttles electrons from NADH, via FMN and iron-sulfur (Fe-S) centers, to quinones in the respiratory chain. The immediate electron acceptor for the enzyme in this species is believed to be a menaquinone. Couples the redox reaction to proton translocation (for every two electrons transferred, four hydrogen ions are translocated across the cytoplasmic membrane), and thus conserves the redox energy in a proton gradient. The sequence is that of NADH-quinone oxidoreductase subunit C/D from Phocaeicola vulgatus (strain ATCC 8482 / DSM 1447 / JCM 5826 / CCUG 4940 / NBRC 14291 / NCTC 11154) (Bacteroides vulgatus).